The sequence spans 101 residues: Small ribosomal subunit protein uS14 (101 aa).

It belongs to the universal ribosomal protein uS14 family. In terms of assembly, part of the 30S ribosomal subunit. Contacts proteins S3 and S10.

In terms of biological role, binds 16S rRNA, required for the assembly of 30S particles and may also be responsible for determining the conformation of the 16S rRNA at the A site. The sequence is that of Small ribosomal subunit protein uS14 from Burkholderia lata (strain ATCC 17760 / DSM 23089 / LMG 22485 / NCIMB 9086 / R18194 / 383).